The chain runs to 438 residues: MRVDEFLKERNINVGDFVRITKEEDGEEVTYEGYIMPPYELSAGDTLVLKLENGYNIGIALEKIRRIEVLERAKVKPEVHFEALIEGKPGLPEVTIIGTGGTIASRIDYETGAVYPAFTAEELAKAVPEIFEVANVKPKLLFNIFSEDMKPKHWVKIAHEVAKALNSGDYGVVVAHGTDTMGYTAAALSFMLRNLGKPVVLVGAQRSSDRPSSDAAMNLICSVRMATSEVAEVMVVMHGETGDTYCLAHRGTKVRKMHTSRRDAFRSINDVPIAKIWPNGEIEFLRKDYRKRSDEEVEVDDKIEEKVALVKVYPGISSEIIDFLVDKGYKGIVIEGTGLGHTPNDIIPSIERAVEEGVAVCMTSQCIYGRVNLNVYSTGRKLLKAGVIPCEDMLPETAYVKLMWVLGHTQNLEEVRKMMLTNYAGEITPYTRFDTYLR.

Residues 92–422 (PEVTIIGTGG…EEVRKMMLTN (331 aa)) form the Asparaginase/glutaminase domain. Catalysis depends on residues T102, T178, D179, and K256.

It belongs to the asparaginase 1 family. GatD subfamily. Heterodimer of GatD and GatE.

The enzyme catalyses L-glutamyl-tRNA(Gln) + L-glutamine + ATP + H2O = L-glutaminyl-tRNA(Gln) + L-glutamate + ADP + phosphate + H(+). Allows the formation of correctly charged Gln-tRNA(Gln) through the transamidation of misacylated Glu-tRNA(Gln) in organisms which lack glutaminyl-tRNA synthetase. The reaction takes place in the presence of glutamine and ATP through an activated gamma-phospho-Glu-tRNA(Gln). The GatDE system is specific for glutamate and does not act on aspartate. This chain is Glutamyl-tRNA(Gln) amidotransferase subunit D, found in Pyrococcus abyssi (strain GE5 / Orsay).